We begin with the raw amino-acid sequence, 458 residues long: RuvB-like protein 1 (458 aa).

73–80 lines the ATP pocket; it reads GPPGTGKT.

The protein belongs to the RuvB family. Interacts with FRI, and with FLX and FES1, two component of the transcription activator complex FRI-C. Interacts with the disease resistance genes RPM1 and RPP5.

It is found in the nucleus. The enzyme catalyses ATP + H2O = ADP + phosphate + H(+). Functionally, proposed core component of the chromatin remodeling INO80 complex which is involved in transcriptional regulation, DNA replication and probably DNA repair. Component of the NuA4 histone acetyltransferase complex which is involved in transcriptional activation of select genes principally by acetylation of nucleosomal histones H4 and H2A. Has single-stranded DNA-stimulated ATPase and ATP-dependent DNA helicase (3' to 5') activity suggesting a role in nuclear processes such as recombination and transcription. The chain is RuvB-like protein 1 (RIN1) from Arabidopsis thaliana (Mouse-ear cress).